The chain runs to 398 residues: Acetylornithine aminotransferase (398 aa).

Pyridoxal 5'-phosphate is bound by residues G105 to A106 and F138. A N(2)-acetyl-L-ornithine-binding site is contributed by R141. D223–Q226 is a binding site for pyridoxal 5'-phosphate. K252 is subject to N6-(pyridoxal phosphate)lysine. T280 lines the N(2)-acetyl-L-ornithine pocket. A pyridoxal 5'-phosphate-binding site is contributed by T281.

Belongs to the class-III pyridoxal-phosphate-dependent aminotransferase family. ArgD subfamily. Homodimer. Requires pyridoxal 5'-phosphate as cofactor.

It is found in the cytoplasm. The catalysed reaction is N(2)-acetyl-L-ornithine + 2-oxoglutarate = N-acetyl-L-glutamate 5-semialdehyde + L-glutamate. The protein operates within amino-acid biosynthesis; L-arginine biosynthesis; N(2)-acetyl-L-ornithine from L-glutamate: step 4/4. The sequence is that of Acetylornithine aminotransferase from Methanocaldococcus jannaschii (strain ATCC 43067 / DSM 2661 / JAL-1 / JCM 10045 / NBRC 100440) (Methanococcus jannaschii).